The chain runs to 305 residues: UDP-3-O-acyl-N-acetylglucosamine deacetylase (305 aa).

The Zn(2+) site is built by His-79, His-238, and Asp-242. His-265 functions as the Proton donor in the catalytic mechanism.

The protein belongs to the LpxC family. Zn(2+) is required as a cofactor.

It carries out the reaction a UDP-3-O-[(3R)-3-hydroxyacyl]-N-acetyl-alpha-D-glucosamine + H2O = a UDP-3-O-[(3R)-3-hydroxyacyl]-alpha-D-glucosamine + acetate. It functions in the pathway glycolipid biosynthesis; lipid IV(A) biosynthesis; lipid IV(A) from (3R)-3-hydroxytetradecanoyl-[acyl-carrier-protein] and UDP-N-acetyl-alpha-D-glucosamine: step 2/6. Its function is as follows. Catalyzes the hydrolysis of UDP-3-O-myristoyl-N-acetylglucosamine to form UDP-3-O-myristoylglucosamine and acetate, the committed step in lipid A biosynthesis. The protein is UDP-3-O-acyl-N-acetylglucosamine deacetylase of Cronobacter sakazakii (strain ATCC BAA-894) (Enterobacter sakazakii).